The following is a 509-amino-acid chain: Steroid 17-alpha-hydroxylase/17,20 lyase (509 aa).

N202 serves as a coordination point for substrate. C442 contributes to the heme binding site.

This sequence belongs to the cytochrome P450 family. Heme is required as a cofactor.

The protein localises to the endoplasmic reticulum membrane. The protein resides in the microsome membrane. The catalysed reaction is a C21-steroid + reduced [NADPH--hemoprotein reductase] + O2 = a 17alpha-hydroxy-C21-steroid + oxidized [NADPH--hemoprotein reductase] + H2O + H(+). It catalyses the reaction progesterone + reduced [NADPH--hemoprotein reductase] + O2 = 17alpha-hydroxyprogesterone + oxidized [NADPH--hemoprotein reductase] + H2O + H(+). It carries out the reaction pregnenolone + reduced [NADPH--hemoprotein reductase] + O2 = 17alpha-hydroxypregnenolone + oxidized [NADPH--hemoprotein reductase] + H2O + H(+). The enzyme catalyses 17alpha-hydroxyprogesterone + reduced [NADPH--hemoprotein reductase] + O2 = androst-4-ene-3,17-dione + acetate + oxidized [NADPH--hemoprotein reductase] + H2O + 2 H(+). The catalysed reaction is 17alpha-hydroxyprogesterone + reduced [NADPH--hemoprotein reductase] + O2 = 16alpha,17alpha-dihydroxyprogesterone + oxidized [NADPH--hemoprotein reductase] + H2O + H(+). It catalyses the reaction 16alpha,17alpha-dihydroxyprogesterone + reduced [NADPH--hemoprotein reductase] + O2 = 6beta,16alpha,17alpha-trihydroxyprogesterone + oxidized [NADPH--hemoprotein reductase] + H2O + H(+). It carries out the reaction 17alpha-hydroxypregnenolone + reduced [NADPH--hemoprotein reductase] + O2 = 3beta-hydroxyandrost-5-en-17-one + acetate + oxidized [NADPH--hemoprotein reductase] + H2O + 2 H(+). The enzyme catalyses 16alpha,17alpha-dihydroxypregnenolone + reduced [NADPH--hemoprotein reductase] + O2 = 3beta,16alpha-dihydroxy-androst-5-en-17-one + acetate + oxidized [NADPH--hemoprotein reductase] + H2O + 2 H(+). The catalysed reaction is 3beta-hydroxyandrost-5-en-17-one + reduced [NADPH--hemoprotein reductase] + O2 = 3beta,16alpha-dihydroxy-androst-5-en-17-one + oxidized [NADPH--hemoprotein reductase] + H2O + H(+). It catalyses the reaction androst-4-ene-3,17-dione + reduced [NADPH--hemoprotein reductase] + O2 = 16alpha-hydroxyandrost-4-ene-3,17-dione + oxidized [NADPH--hemoprotein reductase] + H2O + H(+). Its pathway is steroid hormone biosynthesis. It functions in the pathway steroid biosynthesis; glucocorticoid biosynthesis. Its activity is regulated as follows. Regulated predominantly by intracellular cAMP levels. The 17,20-lyase activity is stimulated by cytochrome b5, which acts as an allosteric effector increasing the Vmax of the lyase activity. In terms of biological role, a cytochrome P450 monooxygenase involved in corticoid and androgen biosynthesis. Catalyzes 17-alpha hydroxylation of C21 steroids, which is common for both pathways. A second oxidative step, required only for androgen synthesis, involves an acyl-carbon cleavage. The 17-alpha hydroxy intermediates, as part of adrenal glucocorticoids biosynthesis pathway, are precursors of cortisol. Hydroxylates steroid hormones, pregnenolone and progesterone to form 17-alpha hydroxy metabolites, followed by the cleavage of the C17-C20 bond to form C19 steroids, dehydroepiandrosterone (DHEA) and androstenedione. Has 16-alpha hydroxylase activity. Catalyzes 16-alpha hydroxylation of 17-alpha hydroxy pregnenolone, followed by the cleavage of the C17-C20 bond to form 16-alpha-hydroxy DHEA. Also 16-alpha hydroxylates androgens, relevant for estriol synthesis. Mechanistically, uses molecular oxygen inserting one oxygen atom into a substrate, and reducing the second into a water molecule, with two electrons provided by NADPH via cytochrome P450 reductase (CPR; NADPH-ferrihemoprotein reductase). In Bison bison (American bison), this protein is Steroid 17-alpha-hydroxylase/17,20 lyase (CYP17A1).